We begin with the raw amino-acid sequence, 466 residues long: Alpha-1A adrenergic receptor (466 aa).

The Extracellular portion of the chain corresponds to 1–27; sequence MVFLSGNASDSSNCTQPPAPVNISKAI. N-linked (GlcNAc...) asparagine glycans are attached at residues Asn-7, Asn-13, and Asn-22. Residues 28–51 form a helical membrane-spanning segment; it reads LLGVILGGLILFGVLGNILVILSV. At 52 to 64 the chain is on the cytoplasmic side; that stretch reads ACHRHLHSVTHYY. The chain crosses the membrane as a helical span at residues 65 to 88; sequence IVNLAVADLLLTSTVLPFSAIFEV. The Extracellular segment spans residues 89-99; the sequence is LGYWAFGRVFC. Cys-99 and Cys-176 are oxidised to a cystine. A helical membrane pass occupies residues 100–122; it reads NIWAAVDVLCCTASIMGLCIISI. Residues 123-143 lie on the Cytoplasmic side of the membrane; it reads DRYIGVSYPLRYPTIVTQRRG. The chain crosses the membrane as a helical span at residues 144–167; it reads LMALLCVWALSLVISIGPLFGWRQ. Residues 168–181 lie on the Extracellular side of the membrane; that stretch reads PAPEDETICQINEE. A helical transmembrane segment spans residues 182 to 205; sequence PGYVLFSALGSFYLPLAIILVMYC. Residues 206–273 are Cytoplasmic-facing; the sequence is RVYVVAKRES…FSREKKAAKT (68 aa). Position 215 is a phosphoserine; by PKA (Ser-215). A helical membrane pass occupies residues 274 to 297; it reads LGIVVGCFVLCWLPFFLVMPIGSF. Topologically, residues 298–305 are extracellular; sequence FPDFKPSE. A helical transmembrane segment spans residues 306-329; that stretch reads TVFKIVFWLGYLNSCINPIIYPCS. Topologically, residues 330–466 are cytoplasmic; it reads SQEFKKAFQN…ISLSENGEEV (137 aa). The Nuclear localization signal motif lies at 334 to 349; that stretch reads KKAFQNVLRIQCLCRK. The S-palmitoyl cysteine moiety is linked to residue Cys-345.

This sequence belongs to the G-protein coupled receptor 1 family. Adrenergic receptor subfamily. ADRA1A sub-subfamily. As to quaternary structure, homo- and heterooligomer. Heterooligomerizes with ADRA1B homooligomers in cardiac myocytes. Interacts with CAVIN4. C-terminal Ser or Thr residues may be phosphorylated. Expressed in heart, brain, liver and prostate, but not in kidney, lung, adrenal, aorta and pituitary. Within the prostate, expressed in the apex, base, periurethral and lateral lobe. Isoform 4 is the most abundant isoform expressed in the prostate with high levels also detected in liver and heart.

It localises to the nucleus membrane. The protein resides in the cell membrane. The protein localises to the cytoplasm. Its subcellular location is the membrane. It is found in the caveola. In terms of biological role, this alpha-adrenergic receptor mediates its action by association with G proteins that activate a phosphatidylinositol-calcium second messenger system. Its effect is mediated by G(q) and G(11) proteins. Nuclear ADRA1A-ADRA1B heterooligomers regulate phenylephrine(PE)-stimulated ERK signaling in cardiac myocytes. The chain is Alpha-1A adrenergic receptor (ADRA1A) from Homo sapiens (Human).